The primary structure comprises 919 residues: GPI ethanolamine phosphate transferase 1 (919 aa).

Topologically, residues 1–9 (MWNKTRTTL) are cytoplasmic. A helical membrane pass occupies residues 10–30 (LAVGVLFHLFYLWSIFDIYFI). The Lumenal segment spans residues 31-457 (SPLVHGMSPY…TTYNWRFIRT (427 aa)). 6 N-linked (GlcNAc...) asparagine glycosylation sites follow: Asn90, Asn138, Asn198, Asn202, Asn286, and Asn312. The helical transmembrane segment at 458–478 (IVTFGFVGWIFFSFIIFLKSF) threads the bilayer. At 479-488 (ILENVIDDQK) the chain is on the cytoplasmic side. A helical membrane pass occupies residues 489–509 (ASPLSHAVFGSIGILLNWILF). The Lumenal portion of the chain corresponds to 510 to 512 (YQH). The helical transmembrane segment at 513 to 533 (SPFNFYMYLLFPLYFWSYIFT) threads the bilayer. Residues 534–553 (NRSVLRSGIKEFFKGTSPWK) are Cytoplasmic-facing. A helical transmembrane segment spans residues 554–574 (RVLITISIISVYEGIVYGFFH). Over 575-576 (RW) the chain is Lumenal. The helical transmembrane segment at 577-597 (TFTLITNILAFYPFICGVREL) threads the bilayer. Position 598 (Ser598) is a topological domain, cytoplasmic. Residues 599–619 (VNILWIITSVLLSTFTLFDAV) form a helical membrane-spanning segment. Over 620 to 626 (KIEDLNQ) the chain is Lumenal. Residues 627–647 (IHLAGLLIILSAFYALYKIHS) traverse the membrane as a helical segment. Residues 648–655 (RINSYTRA) lie on the Cytoplasmic side of the membrane. Residues 656-676 (IFAIQISLVAAMLAVTHRSVI) traverse the membrane as a helical segment. Residues 677 to 687 (SLQLRQGLPRE) lie on the Lumenal side of the membrane. A helical transmembrane segment spans residues 688–708 (SQVAGWIIFFVSLFVMPILHY). At 709-720 (RKPNNDYKVRLL) the chain is on the cytoplasmic side. Residues 721–741 (IIYLTFAPSFIILTISFESLF) traverse the membrane as a helical segment. Residues 742-776 (YFLFTSYMVQWIEIENKIKEMKTQKDENWLQVLRV) lie on the Lumenal side of the membrane. A helical transmembrane segment spans residues 777 to 797 (SVIGFFLLQVAFFGTGNVASI). Residues 798-807 (SSFSLESVCR) lie on the Cytoplasmic side of the membrane. A helical transmembrane segment spans residues 808–828 (LLPIFDPFLMGALLMLKLIIP). Over 829 to 848 (YGLLSTCLGILNLKLNFKDY) the chain is Lumenal. Residues 849-869 (TISSLIISMSDILSLNFFYLL) traverse the membrane as a helical segment. Residues 870 to 885 (RTEGSWLDIGITISNY) lie on the Cytoplasmic side of the membrane. Residues 886-906 (CLAILSSLFMLILEVLGHVLL) form a helical membrane-spanning segment. The Lumenal segment spans residues 907–919 (KNVIIQDKTKKTQ).

It belongs to the PIGG/PIGN/PIGO family. PIGN subfamily. As to quaternary structure, interacts with CSF1; CSF1 channels phosphatidylethanolamine to MCD4 in the endoplasmic reticulum at contact sites to support GPI anchor biosynthesis. Post-translationally, N-glycosylated.

The protein resides in the endoplasmic reticulum membrane. It is found in the golgi apparatus membrane. It localises to the vacuole membrane. The protein operates within glycolipid biosynthesis; glycosylphosphatidylinositol-anchor biosynthesis. Ethanolamine phosphate transferase involved in glycosylphosphatidylinositol-anchor biosynthesis. Transfers ethanolamine phosphate to the first alpha-1,4-linked mannose of the glycosylphosphatidylinositol precursor of GPI-anchor. Ethanolamine phosphate on the alpha-1,4-linked mannose is essential for further mannosylation by GPI10 and is necessary for an efficient recognition of GPI lipids and GPI proteins by the GPI transamidase, for the efficient transport of GPI anchored proteins from endoplasmic reticulum to Golgi and for the physiological incorporation of ceramides into GPI anchors by lipid remodeling. Also involved in non-mitochondrial ATP movements across membrane and participates in Golgi and endoplasmic reticulum function, Also required for the incorporation of BGL2 into the cell wall. This chain is GPI ethanolamine phosphate transferase 1 (MCD4), found in Saccharomyces cerevisiae (strain ATCC 204508 / S288c) (Baker's yeast).